A 368-amino-acid polypeptide reads, in one-letter code: tRNA 2-selenouridine synthase (368 aa).

Residues 12 to 136 enclose the Rhodanese domain; it reads FLGDAPLLDT…MRGFLLETIE (125 aa). Cys-95 (S-selanylcysteine intermediate) is an active-site residue.

The protein belongs to the SelU family. In terms of assembly, monomer.

The enzyme catalyses 5-methylaminomethyl-2-thiouridine(34) in tRNA + selenophosphate + (2E)-geranyl diphosphate + H2O + H(+) = 5-methylaminomethyl-2-selenouridine(34) in tRNA + (2E)-thiogeraniol + phosphate + diphosphate. The catalysed reaction is 5-methylaminomethyl-2-thiouridine(34) in tRNA + (2E)-geranyl diphosphate = 5-methylaminomethyl-S-(2E)-geranyl-thiouridine(34) in tRNA + diphosphate. It catalyses the reaction 5-methylaminomethyl-S-(2E)-geranyl-thiouridine(34) in tRNA + selenophosphate + H(+) = 5-methylaminomethyl-2-(Se-phospho)selenouridine(34) in tRNA + (2E)-thiogeraniol. It carries out the reaction 5-methylaminomethyl-2-(Se-phospho)selenouridine(34) in tRNA + H2O = 5-methylaminomethyl-2-selenouridine(34) in tRNA + phosphate. In terms of biological role, involved in the post-transcriptional modification of the uridine at the wobble position (U34) of tRNA(Lys), tRNA(Glu) and tRNA(Gln). Catalyzes the conversion of 2-thiouridine (S2U-RNA) to 2-selenouridine (Se2U-RNA). Acts in a two-step process involving geranylation of 2-thiouridine (S2U) to S-geranyl-2-thiouridine (geS2U) and subsequent selenation of the latter derivative to 2-selenouridine (Se2U) in the tRNA chain. The protein is tRNA 2-selenouridine synthase of Bordetella bronchiseptica (strain ATCC BAA-588 / NCTC 13252 / RB50) (Alcaligenes bronchisepticus).